The following is a 132-amino-acid chain: Small ribosomal subunit protein uS11 (132 aa).

Belongs to the universal ribosomal protein uS11 family. Part of the 30S ribosomal subunit.

Functionally, located on the platform of the 30S subunit. This is Small ribosomal subunit protein uS11 from Sulfolobus acidocaldarius (strain ATCC 33909 / DSM 639 / JCM 8929 / NBRC 15157 / NCIMB 11770).